The chain runs to 436 residues: GTPase Der (436 aa).

2 consecutive EngA-type G domains span residues proline 4–glutamate 167 and isoleucine 175–asparagine 351. Residues glycine 10–serine 17, aspartate 57–isoleucine 61, asparagine 119–aspartate 122, glycine 181–serine 188, aspartate 229–methionine 233, and asparagine 294–aspartate 297 contribute to the GTP site. A KH-like domain is found at threonine 352–lysine 436.

The protein belongs to the TRAFAC class TrmE-Era-EngA-EngB-Septin-like GTPase superfamily. EngA (Der) GTPase family. As to quaternary structure, associates with the 50S ribosomal subunit.

Functionally, GTPase that plays an essential role in the late steps of ribosome biogenesis. This chain is GTPase Der, found in Streptococcus gordonii (strain Challis / ATCC 35105 / BCRC 15272 / CH1 / DL1 / V288).